Here is a 610-residue protein sequence, read N- to C-terminus: Elongation factor 4 (610 aa).

The region spanning S13 to K195 is the tr-type G domain. GTP is bound by residues D25–T30 and N142–D145.

Belongs to the TRAFAC class translation factor GTPase superfamily. Classic translation factor GTPase family. LepA subfamily.

It is found in the cell inner membrane. It carries out the reaction GTP + H2O = GDP + phosphate + H(+). Required for accurate and efficient protein synthesis under certain stress conditions. May act as a fidelity factor of the translation reaction, by catalyzing a one-codon backward translocation of tRNAs on improperly translocated ribosomes. Back-translocation proceeds from a post-translocation (POST) complex to a pre-translocation (PRE) complex, thus giving elongation factor G a second chance to translocate the tRNAs correctly. Binds to ribosomes in a GTP-dependent manner. The sequence is that of Elongation factor 4 from Rhizobium etli (strain ATCC 51251 / DSM 11541 / JCM 21823 / NBRC 15573 / CFN 42).